Consider the following 154-residue polypeptide: Protein X (154 aa).

The tract at residues 68–117 is mitochondrial targeting sequence; the sequence is PCALRFTSARRMETTVNANQVLPKVLHKRTLGLSALSTTDLEAYFKDCVF.

Belongs to the orthohepadnavirus protein X family. As to quaternary structure, may form homodimer. May interact with host CEBPA, CFLAR, CREB1, DDB1, E4F1, HBXIP, HSPD1/HSP60, NFKBIA, POLR2E and SMAD4. Interacts with host SMC5-SMC6 complex and induces its degradation. Interacts with host TRPC4AP; leading to prevent ubiquitination of TRPC4AP. Interacts with host PLSCR1; this interaction promotes ubiquitination and degradation of HBx and impairs HBx-mediated cell proliferation. A fraction may be phosphorylated in insect cells and HepG2 cells, a human hepatoblastoma cell line. Phosphorylated in vitro by host protein kinase C or mitogen-activated protein kinase. N-acetylated in insect cells.

The protein resides in the host cytoplasm. It is found in the host nucleus. The protein localises to the host mitochondrion. Functionally, multifunctional protein that plays a role in silencing host antiviral defenses and promoting viral transcription. Does not seem to be essential for HBV infection. May be directly involved in development of cirrhosis and liver cancer (hepatocellular carcinoma). Most of cytosolic activities involve modulation of cytosolic calcium. The effect on apoptosis is controversial depending on the cell types in which the studies have been conducted. May induce apoptosis by localizing in mitochondria and causing loss of mitochondrial membrane potential. May also modulate apoptosis by binding host CFLAR, a key regulator of the death-inducing signaling complex (DISC). Promotes viral transcription by using the host E3 ubiquitin ligase DDB1 to target the SMC5-SMC6 complex to proteasomal degradation. This host complex would otherwise bind to viral episomal DNA, and prevents its transcription. Moderately stimulates transcription of many different viral and cellular transcription elements. Promoters and enhancers stimulated by HBx contain DNA binding sites for NF-kappa-B, AP-1, AP-2, c-EBP, ATF/CREB, or the calcium-activated factor NF-AT. The polypeptide is Protein X (Homo sapiens (Human)).